A 276-amino-acid polypeptide reads, in one-letter code: Glyoxal reductase (276 aa).

The active-site Proton donor is the Y54. Position 112 (H112) interacts with substrate. 190 to 242 (SPLMQGQLLDNEVLTQIAEKHNKSVAQVILRWDLQHGVVTIPKSIKEHRIIEN) is a binding site for NADP(+).

The protein belongs to the aldo/keto reductase family.

It catalyses the reaction (S)-lactaldehyde + NADP(+) = methylglyoxal + NADPH + H(+). In terms of biological role, reduces glyoxal and methylglyoxal (2-oxopropanal). Is not involved in the vitamin B6 biosynthesis. The protein is Glyoxal reductase (yvgN) of Bacillus subtilis (strain 168).